We begin with the raw amino-acid sequence, 232 residues long: Ribonuclease 3 (232 aa).

The RNase III domain occupies 5-134 (QTVLKNHFAI…FLGALLLDKD (130 aa)). E47 lines the Mg(2+) pocket. Residue D51 is part of the active site. Mg(2+)-binding residues include D120 and E123. E123 is a catalytic residue. A DRBM domain is found at 160–229 (DYKTHLQELL…AKNAVEKGLD (70 aa)).

Belongs to the ribonuclease III family. As to quaternary structure, homodimer. Mg(2+) serves as cofactor.

Its subcellular location is the cytoplasm. It catalyses the reaction Endonucleolytic cleavage to 5'-phosphomonoester.. Its function is as follows. Digests double-stranded RNA. Involved in the processing of primary rRNA transcript to yield the immediate precursors to the large and small rRNAs (23S and 16S). Processes some mRNAs, and tRNAs when they are encoded in the rRNA operon. Processes pre-crRNA and tracrRNA of type II CRISPR loci if present in the organism. This Streptococcus pneumoniae (strain CGSP14) protein is Ribonuclease 3.